A 122-amino-acid polypeptide reads, in one-letter code: MIQVESRLEVADNTGAKSVLCIKVLGGSKRRYASVGDVIKVSIKEAAPRGRVKKGEIYSAVVVRTAKGIRRSDGSLVKFDGNAAVLLNAKLEPIGTRIFGPVTRELRTEKFMKIVSLAPEVL.

This sequence belongs to the universal ribosomal protein uL14 family. Part of the 50S ribosomal subunit. Forms a cluster with proteins L3 and L19. In the 70S ribosome, L14 and L19 interact and together make contacts with the 16S rRNA in bridges B5 and B8.

Functionally, binds to 23S rRNA. Forms part of two intersubunit bridges in the 70S ribosome. This Albidiferax ferrireducens (strain ATCC BAA-621 / DSM 15236 / T118) (Rhodoferax ferrireducens) protein is Large ribosomal subunit protein uL14.